The sequence spans 315 residues: tRNA dimethylallyltransferase (315 aa).

11-18 (GPTASGKS) is an ATP binding site. Substrate is bound at residue 13–18 (TASGKS). Interaction with substrate tRNA stretches follow at residues 36–39 (DSMQ) and 160–164 (QRLIR).

Belongs to the IPP transferase family. As to quaternary structure, monomer. Requires Mg(2+) as cofactor.

The catalysed reaction is adenosine(37) in tRNA + dimethylallyl diphosphate = N(6)-dimethylallyladenosine(37) in tRNA + diphosphate. Catalyzes the transfer of a dimethylallyl group onto the adenine at position 37 in tRNAs that read codons beginning with uridine, leading to the formation of N6-(dimethylallyl)adenosine (i(6)A). This chain is tRNA dimethylallyltransferase, found in Rickettsia bellii (strain RML369-C).